The following is an 890-amino-acid chain: Chloroquine resistance transporter (890 aa).

Disordered regions lie at residues 1–163 (MPPA…EAPL) and 280–300 (GMQR…AAEG). Over 1–349 (MPPAHHGSGG…RATRWIDRNA (349 aa)) the chain is Cytoplasmic. Over residues 8-19 (SGGRRRPGRGNK) the composition is skewed to basic residues. Composition is skewed to low complexity over residues 102 to 126 (APSQ…SSRS) and 134 to 156 (SPVA…TSAS). A helical membrane pass occupies residues 350–372 (ATVRVACYTFLLLVTSTGNTICF). Residues 373-391 (KKMIDKMPNYSPCLTQVTT) lie on the Vacuolar side of the membrane. Residues 392–412 (VVFVPVFFALSLYTDYAGGLP) traverse the membrane as a helical segment. Residues 413 to 422 (QEMADFPKRN) lie on the Cytoplasmic side of the membrane. Residues 423-443 (FAVMGFLDSFSGVMAIIGAVH) traverse the membrane as a helical segment. Topologically, residues 444–447 (TTGT) are vacuolar. The helical transmembrane segment at 448-468 (TQVVLQQSCIVFSLLASIVML) threads the bilayer. The Cytoplasmic segment spans residues 469-471 (RKR). Residues 472-492 (FHAAHYLGALVIILGVLVVKL) traverse the membrane as a helical segment. Residues 493-505 (PDLLHPSSDGGGD) lie on the Vacuolar side of the membrane. The helical transmembrane segment at 506–526 (VFVFNLLYLLSNLPTAVSCVY) threads the bilayer. Residues 527–544 (KEVAFRGVEMGTNYLQAW) are Cytoplasmic-facing. The chain crosses the membrane as a helical span at residues 545–565 (VALFQFLIGFLVLPLNALPVL). The Vacuolar portion of the chain corresponds to 566-614 (GPQRVPLAELPASLWNGTRCLFGFNTIVTNCGGAGNMESPCDNCEGAWK). N581 is a glycosylation site (N-linked (GlcNAc...) asparagine). Intrachain disulfides connect C585–C609 and C596–C606. Residues 615-634 (YVGMYLSFNLLYNMFIIFVV) traverse the membrane as a helical segment. Topologically, residues 635–640 (KSGGAA) are cytoplasmic. A helical membrane pass occupies residues 641 to 663 (LTFLVSTLRLPVTALAFCSRAIM). The Vacuolar segment spans residues 664–673 (GDRAVPPKAT). The helical transmembrane segment at 674–694 (DFYGLLVLILGLVIYRAGGIM) threads the bilayer. Topologically, residues 695-890 (KRRAQRRAVA…GKSRANNGCI (196 aa)) are cytoplasmic. A disordered region spans residues 798–871 (AAFTPFTQRM…NRVGGYEPPS (74 aa)).

This sequence belongs to the CRT-like transporter family.

It is found in the vacuole membrane. In terms of biological role, nutrient transporter. Involved in maintaining the osmotic homeostasis of the digestive vacuole. Required for the proper organization of the endolysosomal system and, in turn, indirectly for microneme secretion and parasite invasion. Required for bradyzoite viability and cyst development. The protein is Chloroquine resistance transporter of Toxoplasma gondii.